We begin with the raw amino-acid sequence, 892 residues long: von Willebrand factor A domain-containing protein 7 (892 aa).

The N-terminal stretch at 1–27 is a signal peptide; it reads MLPVEVPLSQLGPPVLLLQLLLPPTSA. The N-linked (GlcNAc...) asparagine glycan is linked to asparagine 54. Positions 231–272 are disordered; the sequence is YFGTNPPKPPGKCSHGGRFDQSSSQPPRGGINKDSTSPSFSP. The VWFA domain maps to 313-495; that stretch reads ASSLSFVLDT…HIRDVAAVVG (183 aa).

The protein resides in the secreted. This is von Willebrand factor A domain-containing protein 7 (Vwa7) from Rattus norvegicus (Rat).